The primary structure comprises 129 residues: Serum amyloid A-2 protein (129 aa).

Positions 1–18 (MKLFTGLIFCSLVLGVSS) are cleaved as a signal peptide. The residue at position 19 (Gln-19) is a Pyrrolidone carboxylic acid. The disordered stretch occupies residues 92–129 (GDSGHGVEDSKADQAANEWGRSGKDPNHFRPSGLPDKY).

Belongs to the SAA family. Apolipoprotein of the HDL complex. Expressed by the liver; secreted in plasma.

The protein localises to the secreted. Functionally, major acute phase reactant. The sequence is that of Serum amyloid A-2 protein (SAA2P0DJI9) from Neovison vison (American mink).